Here is a 314-residue protein sequence, read N- to C-terminus: MKEIVRALEGYGPPKDKAAEQCGWQAGGALCPGGLCCSQYGWCANTPEYCGSGCQSQCDGGGGGEDGGIDLGSIISRSTFEEMLKHRNDAACPAKGFYTYDAFISAAKAFPAFGTTGDVDTRKREIAAFFGQTSHATTGGWPTAPDGPYAWGYCYKEELNQASSYCSPSPAYPCAPGKKYYGRGPIQLSWNYNYGQCGQALGLDLLNNPDLVATDRVISFKAAIWFWMTPQFPKPSCHDVITGQWSPTGHDISAGRAPGYGVITNIINGGLECGRGWDARVEDRIGFYKRYCDMFAVGYGSNLDCYNQTPFGLG.

The signal sequence occupies residues 1-19 (MKEIVRALEGYGPPKDKAA). Positions 20–60 (EQCGWQAGGALCPGGLCCSQYGWCANTPEYCGSGCQSQCDG) constitute a Chitin-binding type-1 domain. 7 disulfides stabilise this stretch: cysteine 22–cysteine 37, cysteine 31–cysteine 43, cysteine 36–cysteine 50, cysteine 54–cysteine 58, cysteine 92–cysteine 154, cysteine 166–cysteine 174, and cysteine 273–cysteine 305.

This sequence belongs to the glycosyl hydrolase 19 family. Chitinase class I subfamily.

Its function is as follows. Inactive chitinase-like protein that does not exhibit hydrolytic activity toward chitin. Binds strongly to chitin and possesses antifungal activity toward the fungal pathogen Altenaria alternata in plate assays. Inhibits the growth of Fusarium oxysporum on plate assays. Probably involved in defense against fungal pathogens through a mechanism that only involves carbohydrate binding. This Hevea brasiliensis (Para rubber tree) protein is Inactive chitinase-like protein 1.